A 118-amino-acid chain; its full sequence is NADH-quinone oxidoreductase subunit A (118 aa).

Helical transmembrane passes span 6–26, 64–84, and 87–107; these read LPVLIFLLVALVVGVAPLLMG, AILFILFDLEIAFLFPWAVVF, and IGMTGFLAMMLFLAILVVGFI.

The protein belongs to the complex I subunit 3 family. NDH-1 is composed of 14 different subunits. Subunits NuoA, H, J, K, L, M, N constitute the membrane sector of the complex.

It is found in the cell inner membrane. It carries out the reaction a quinone + NADH + 5 H(+)(in) = a quinol + NAD(+) + 4 H(+)(out). Functionally, NDH-1 shuttles electrons from NADH, via FMN and iron-sulfur (Fe-S) centers, to quinones in the respiratory chain. The immediate electron acceptor for the enzyme in this species is believed to be ubiquinone. Couples the redox reaction to proton translocation (for every two electrons transferred, four hydrogen ions are translocated across the cytoplasmic membrane), and thus conserves the redox energy in a proton gradient. The sequence is that of NADH-quinone oxidoreductase subunit A from Acidithiobacillus ferrooxidans (strain ATCC 53993 / BNL-5-31) (Leptospirillum ferrooxidans (ATCC 53993)).